A 178-amino-acid polypeptide reads, in one-letter code: Protein GrpE (178 aa).

The interval 1–22 is disordered; it reads MSENQNPSPSPEEIEAAMSANA.

The protein belongs to the GrpE family. As to quaternary structure, homodimer.

The protein localises to the cytoplasm. Participates actively in the response to hyperosmotic and heat shock by preventing the aggregation of stress-denatured proteins, in association with DnaK and GrpE. It is the nucleotide exchange factor for DnaK and may function as a thermosensor. Unfolded proteins bind initially to DnaJ; upon interaction with the DnaJ-bound protein, DnaK hydrolyzes its bound ATP, resulting in the formation of a stable complex. GrpE releases ADP from DnaK; ATP binding to DnaK triggers the release of the substrate protein, thus completing the reaction cycle. Several rounds of ATP-dependent interactions between DnaJ, DnaK and GrpE are required for fully efficient folding. This chain is Protein GrpE, found in Acidovorax ebreus (strain TPSY) (Diaphorobacter sp. (strain TPSY)).